We begin with the raw amino-acid sequence, 113 residues long: Kita-kyushu lung cancer antigen 1 (113 aa).

Residues 1 to 3 (MNF) are Cytoplasmic-facing. A helical; Signal-anchor for type II membrane protein transmembrane segment spans residues 4 to 21 (YLLLASSILCALIVFWKY). The Extracellular segment spans residues 22-113 (RRFQRNTGEM…RGASPHRKST (92 aa)). An N-linked (GlcNAc...) asparagine glycan is attached at Asn83.

As to expression, specifically expressed in testis. Expressed by cancer cell lines.

The protein resides in the cell membrane. The sequence is that of Kita-kyushu lung cancer antigen 1 (CT83) from Homo sapiens (Human).